The sequence spans 606 residues: MSTASAASSSSSSSASEMIEAPSQVLNFEEIDYKEIEVEEVVGRGAFGVVCKAKWRAKDVAIKQIESESERKAFIVELRQLSRVNHPNIVKLYGACLNPVCLVMEYAEGGSLYNVLHGAEPLPYYTAAHAMSWCLQCSQGVAYLHSMQPKALIHRDLKPPNLLLVAGGTVLKICDFGTACDIQTHMTNNKGSAAWMAPEVFEGSNYSEKCDVFSWGIILWEVITRRKPFDEIGGPAFRIMWAVHNGTRPPLIKNLPKPIESLMTRCWSKDPSQRPSMEEIVKIMTHLMRYFPGADEPLQYPCQYSDEGQSNSATSTGSFMDIASTNTSNKSDTNMEQVPATNDTIKRLESKLLKNQAKQQSDSGRLSLGASRGSSVESLPPTSEGKRMSADMSEIEARIVATTAYTKPKRGHRKTASFGNILDVPEIVISGNGQPRRRSIQDLTVTGTEPGQVSSRSSSPSVRMITTSGPTSEKPARSLPWTPDDSTDTNGSDNSIPMAYLTLDHQLQPLAPCPNSKESMAVFEQHCKMAQEYMKVQTEIALLLQRKQELVAELDQDEKDQQNTSRLVQEHKKLLDENKSLSTYYQQCKKQLEVIRSQQQKRQGTS.

The tract at residues 1 to 300 (MSTASAASSS…FPGADEPLQY (300 aa)) is interaction with MAPK8IP1. The Protein kinase domain occupies 36–291 (IEVEEVVGRG…KIMTHLMRYF (256 aa)). ATP contacts are provided by residues 42–50 (VGRGAFGVV) and Lys-63. Lys-72 participates in a covalent cross-link: Glycyl lysine isopeptide (Lys-Gly) (interchain with G-Cter in ubiquitin). Asp-156 acts as the Proton acceptor in catalysis. Residue Lys-158 forms a Glycyl lysine isopeptide (Lys-Gly) (interchain with G-Cter in ubiquitin) linkage. Phosphothreonine; by autocatalysis is present on residues Thr-184 and Thr-187. Ser-192 bears the Phosphoserine; by autocatalysis mark. Lys-209 participates in a covalent cross-link: Glycyl lysine isopeptide (Lys-Gly) (interchain with G-Cter in ubiquitin). Disordered stretches follow at residues 301–338 (PCQYSDEGQSNSATSTGSFMDIASTNTSNKSDTNMEQV) and 354–391 (KNQAKQQSDSGRLSLGASRGSSVESLPPTSEGKRMSAD). Over residues 306–338 (DEGQSNSATSTGSFMDIASTNTSNKSDTNMEQV) the composition is skewed to polar residues. Positions 361 to 375 (SDSGRLSLGASRGSS) are enriched in low complexity. 3 positions are modified to phosphoserine: Ser-367, Ser-389, and Ser-439. Over residues 443-452 (LTVTGTEPGQ) the composition is skewed to polar residues. The disordered stretch occupies residues 443-492 (LTVTGTEPGQVSSRSSSPSVRMITTSGPTSEKPARSLPWTPDDSTDTNGS). A compositionally biased stretch (low complexity) spans 453-463 (VSSRSSSPSVR). A Phosphoserine modification is found at Ser-455.

The protein belongs to the protein kinase superfamily. STE Ser/Thr protein kinase family. MAP kinase kinase kinase subfamily. In terms of assembly, can form homodimer. Binds both upstream activators and downstream substrates in multimolecular complexes. Interacts with TAB1/MAP3K7IP1, TAB2/MAP3K7IP2 and TAB3/MAP3K7IP3. Identified in the TRIKA2 complex composed of MAP3K7/TAK1, TAB1/MAP3K7IP1 and TAB2/MAP3K7IP2. Interacts with PPM1L and PPM1B/PP2CB. Interaction with PP2A and PPP6C leads to its repressed activity. Interacts with TRAF6 and TAB1/MAP3K7IP1; during IL-1 signaling. Interacts with TAOK1 and TAOK2; interaction with TAOK2 interferes with MAP3K7 interaction with IKKA, thus preventing NF-kappa-B activation. Interacts with DYNC2I2 (via WD domains). Interacts with CYLD and RBCK1. Interacts with TGFBR1; induces MAP3K7/TAK1 activation by TRAF6. Interacts with MAPK8IP1 and SMAD6. Interacts with isoform 1 of VRK2. Interacts with DAB2; the interaction is induced by TGF-beta stimulation and may mediate TGF-beta stimulated JNK activation. Interacts with TRIM5. Part of a complex containing ITCH, NDFIP1 and MAP3K7. Interacts with PLEKHM1 (via N- and C-terminus). Found in a complex with SH3RF1, RAC2, MAP2K7/MKK7, MAPK8IP1/JIP1, MAPK8/JNK1 and MAPK9/JNK2. Interacts with SASH1. Interacts with RIPK1. Mg(2+) serves as cofactor. Association with TAB1/MAP3K7IP1 promotes autophosphorylation at Ser-192 and subsequent activation. Association with TAB2/MAP3K7IP2, itself associated with free unanchored Lys-63 polyubiquitin chain, promotes autophosphorylation and subsequent activation of MAP3K7. Dephosphorylation at Ser-192 by PPM1B/PP2CB and at Thr-187 by PP2A and PPP6C leads to inactivation. Deubiquitinated by USP19; leading to negative regulation of TNF-alpha- and IL-1beta-triggered NF-kappa-B activation. In terms of processing, 'Lys-48'-linked polyubiquitination at Lys-72 is induced by TNFalpha, and leads to proteasomal degradation. Undergoes 'Lys-48'-linked polyubiquitination catalyzed by ITCH. 'Lys-63'-linked polyubiquitination at Lys-158 by TRIM8 does not lead to proteasomal degradation but contributes to autophosphorylation and activation. Deubiquitinated by CYLD, a protease that selectively cleaves 'Lys-63'-linked ubiquitin chains.

Its subcellular location is the cytoplasm. The protein localises to the cell membrane. The catalysed reaction is L-seryl-[protein] + ATP = O-phospho-L-seryl-[protein] + ADP + H(+). It catalyses the reaction L-threonyl-[protein] + ATP = O-phospho-L-threonyl-[protein] + ADP + H(+). Its activity is regulated as follows. Activated by pro-inflammatory cytokines and in response to physical and chemical stresses, including osmotic stress, oxidative stress, arsenic and ultraviolet light irradiation. Activated by 'Lys-63'-linked polyubiquitination and by autophosphorylation. Association with TAB1/MAP3K7IP1 and TAB2/MAP3K7IP2 promotes activation through autophosphorylation, whereas PPM1B/PP2CB, PP2A and PPP6C dephosphorylation leads to inactivation. Ceramides are also able to activate MAP3K7/TAK1. Serine/threonine kinase which acts as an essential component of the MAP kinase signal transduction pathway. Plays an important role in the cascades of cellular responses evoked by changes in the environment. Mediates signal transduction of TRAF6, various cytokines including interleukin-1 (IL-1), transforming growth factor-beta (TGFB), TGFB-related factors like BMP2 and BMP4, toll-like receptors (TLR), tumor necrosis factor receptor CD40 and B-cell receptor (BCR). Once activated, acts as an upstream activator of the MKK/JNK signal transduction cascade and the p38 MAPK signal transduction cascade through the phosphorylation and activation of several MAP kinase kinases like MAP2K1/MEK1, MAP2K3/MKK3, MAP2K6/MKK6 and MAP2K7/MKK7. These MAP2Ks in turn activate p38 MAPKs and c-jun N-terminal kinases (JNKs); both p38 MAPK and JNK pathways control the transcription factors activator protein-1 (AP-1). Independently of MAP2Ks and p38 MAPKs, acts as a key activator of NF-kappa-B by promoting activation of the I-kappa-B-kinase (IKK) core complex. Mechanistically, recruited to polyubiquitin chains of RIPK2 and IKBKG/NEMO via TAB2/MAP3K7IP2 and TAB3/MAP3K7IP3, and catalyzes phosphorylation and activation of IKBKB/IKKB component of the IKK complex, leading to NF-kappa-B activation. In osmotic stress signaling, plays a major role in the activation of MAPK8/JNK1, but not that of NF-kappa-B. Promotes TRIM5 capsid-specific restriction activity. Phosphorylates RIPK1 at 'Ser-321' which positively regulates RIPK1 interaction with RIPK3 to promote necroptosis but negatively regulates RIPK1 kinase activity and its interaction with FADD to mediate apoptosis. Phosphorylates STING1 in response to cGAMP-activation, promoting association between STEEP1 and STING1 and STING1 translocation to COPII vesicles. This Rattus norvegicus (Rat) protein is Mitogen-activated protein kinase kinase kinase 7 (Map3k7).